The sequence spans 376 residues: Flagellin B (376 aa).

Residues 103 to 130 (SNSSSERQAIQEEVSALNDELNRIAETT) are a coiled coil.

The protein belongs to the bacterial flagellin family. Heteromer of multiple flagellin subunits including FlaA, FlaB, FlaC, FlaD and possibly FlaE.

It localises to the secreted. Its subcellular location is the bacterial flagellum. Its function is as follows. Flagellin is the subunit protein which polymerizes to form the filaments of bacterial flagella. FlaB is not essential for flagellar synthesis and motility. This chain is Flagellin B (flaB), found in Vibrio anguillarum (Listonella anguillarum).